The following is a 195-amino-acid chain: uncharacterized protein (195 aa).

Residues 143–195 form a disordered region; sequence NKLIETINTNRTNNTDNKSTKSKKQTETKKSLRTNKIVKQPINKSKKNIREEY. The span at 148–159 shows a compositional bias: low complexity; that stretch reads TINTNRTNNTDN.

This is an uncharacterized protein from Acanthamoeba polyphaga (Amoeba).